We begin with the raw amino-acid sequence, 198 residues long: Large ribosomal subunit protein uL5 (198 aa).

Belongs to the universal ribosomal protein uL5 family. Part of the 50S ribosomal subunit; part of the 5S rRNA/L5/L18/L25 subcomplex. Contacts the 5S rRNA and the P site tRNA. Forms a bridge to the 30S subunit in the 70S ribosome.

Its function is as follows. This is one of the proteins that bind and probably mediate the attachment of the 5S RNA into the large ribosomal subunit, where it forms part of the central protuberance. In the 70S ribosome it contacts protein S13 of the 30S subunit (bridge B1b), connecting the 2 subunits; this bridge is implicated in subunit movement. Contacts the P site tRNA; the 5S rRNA and some of its associated proteins might help stabilize positioning of ribosome-bound tRNAs. This Chlorobium phaeovibrioides (strain DSM 265 / 1930) (Prosthecochloris vibrioformis (strain DSM 265)) protein is Large ribosomal subunit protein uL5.